Consider the following 333-residue polypeptide: MATGGYRSGGSTTTDFLEEWKAKREKMRAKQNPAGPGSSGGDPAAKSPAGSLTPTAVAGTSELNHGPAGAAAPAAPAPGALNCAHGSSTLPRAAPGSRRAEDECPSAAAASGAPGSRGDEEEPDSAREKGRSSGPSARKGKGQIEKRKLREKRRSTGVVNIPAAECLDEYEDDEAGQKERKREDAITQQNTIQNEAATLPDPGTSYLPQDPSRTVPGRYKSTTSAPEDEISNRYPRTDRSGFSRHNRDANAPASFSSSSTLEKRIEDLEKEVVRERQENLRLVRLMQDKEEMIGKLKEEIDLLNRDLDDMEDENEQLKQENKTLLKVVGQLTR.

Composition is skewed to low complexity over residues 1–14 (MATG…STTT), 33–51 (PAGP…PAGS), 66–80 (GPAG…APGA), and 105–116 (PSAAAASGAPGS). The interval 1–262 (MATGGYRSGG…ASFSSSSTLE (262 aa)) is disordered. The B30.2/SPRY domain-binding motif motif lies at 62–66 (ELNHG). A Nuclear localization signal motif is present at residues 138 to 154 (RKGKGQIEKRKLREKRR). Positions 138–196 (RKGKGQIEKRKLREKRRSTGVVNIPAAECLDEYEDDEAGQKERKREDAITQQNTIQNEA) are selective for apoptosis induction in cancer cells (SAC). Thr156 is modified (phosphothreonine; by PKA). Residues 175–185 (AGQKERKREDA) show a composition bias toward basic and acidic residues. A compositionally biased stretch (polar residues) spans 186 to 196 (ITQQNTIQNEA). A Phosphoserine modification is found at Ser224. Positions 235 to 248 (PRTDRSGFSRHNRD) are enriched in basic and acidic residues. A coiled-coil region spans residues 255-333 (FSSSSTLEKR…LLKVVGQLTR (79 aa)). Positions 293–333 (IGKLKEEIDLLNRDLDDMEDENEQLKQENKTLLKVVGQLTR) are leucine-zipper.

As to quaternary structure, homooligomer. Interacts (via the C-terminal region) with WT1. Interacts with THAP1. Interacts with AATF. Interacts with BACE1. Interacts with SPSB1 (via B30.2/SPRY domain); this interaction is direct and occurs in association with the Elongin BC complex. Interacts with SPSB2 (via B30.2/SPRY domain); this interaction occurs in association with the Elongin BC complex. Interacts with SPSB4 (via B30.2/SPRY domain); this interaction occurs in association with the Elongin BC complex. Component of a ternary complex composed of SQSTM1 and PRKCZ. Interacts with actin. Post-translationally, preferentially phosphorylated at the Thr-156 by PKC in cancer cells.

It is found in the cytoplasm. The protein resides in the nucleus. Functionally, pro-apoptotic protein capable of selectively inducing apoptosis in cancer cells, sensitizing the cells to diverse apoptotic stimuli and causing regression of tumors in animal models. Induces apoptosis in certain cancer cells by activation of the Fas prodeath pathway and coparallel inhibition of NF-kappa-B transcriptional activity. Inhibits the transcriptional activation and augments the transcriptional repression mediated by WT1. Down-regulates the anti-apoptotic protein BCL2 via its interaction with WT1. Also seems to be a transcriptional repressor by itself. May be directly involved in regulating the amyloid precursor protein (APP) cleavage activity of BACE1. This is PRKC apoptosis WT1 regulator protein (Pawr) from Mus musculus (Mouse).